Reading from the N-terminus, the 635-residue chain is DNA primase (635 aa).

The segment at 41–65 (CPFHDEKSPSFSVSPAKQMYYCFGC) adopts a CHC2-type zinc-finger fold. Positions 265–348 (DEAILVEGYF…SGQVNLRILN (84 aa)) constitute a Toprim domain. Mg(2+) contacts are provided by E271, D317, and D319.

Belongs to the DnaG primase family. As to quaternary structure, monomer. Interacts with DnaB. The cofactor is Zn(2+). It depends on Mg(2+) as a cofactor.

The enzyme catalyses ssDNA + n NTP = ssDNA/pppN(pN)n-1 hybrid + (n-1) diphosphate.. In terms of biological role, RNA polymerase that catalyzes the synthesis of short RNA molecules used as primers for DNA polymerase during DNA replication. The protein is DNA primase of Synechocystis sp. (strain ATCC 27184 / PCC 6803 / Kazusa).